The following is a 151-amino-acid chain: Copper transporter 2 (151 aa).

The next 2 membrane-spanning stretches (helical) occupy residues 42-62 (GARG…AVLL) and 97-117 (VAYL…LAIV).

This sequence belongs to the copper transporter (Ctr) (TC 1.A.56) family. SLC31A subfamily. As to quaternary structure, self-interacts. Interacts with SWEET11 and COPT1.

It localises to the cell membrane. Functionally, involved in the transport of copper, in cooperation with SWEET11 and COPT1. Contributes to the removal of copper (Cu) from xylem, and thus to the sensitivity toward bacterial pathogens such as X.oryzae pv. oryzae (Xoo). The polypeptide is Copper transporter 2 (COPT2) (Oryza sativa subsp. japonica (Rice)).